The sequence spans 354 residues: Glycerol-1-phosphate dehydrogenase [NAD(P)+] (354 aa).

NAD(+)-binding positions include 102–106 (GRSID) and 124–127 (TAAS). A substrate-binding site is contributed by aspartate 129. Serine 133 contributes to the NAD(+) binding site. Aspartate 176 lines the substrate pocket. Zn(2+)-binding residues include aspartate 176 and histidine 256. Position 260 (histidine 260) interacts with substrate. Histidine 272 contacts Zn(2+).

The protein belongs to the glycerol-1-phosphate dehydrogenase family. The cofactor is Zn(2+).

It localises to the cytoplasm. The catalysed reaction is sn-glycerol 1-phosphate + NAD(+) = dihydroxyacetone phosphate + NADH + H(+). The enzyme catalyses sn-glycerol 1-phosphate + NADP(+) = dihydroxyacetone phosphate + NADPH + H(+). It participates in membrane lipid metabolism; glycerophospholipid metabolism. Its function is as follows. Catalyzes the NAD(P)H-dependent reduction of dihydroxyacetonephosphate (DHAP or glycerone phosphate) to glycerol 1-phosphate (G1P). The G1P thus generated is used as the glycerophosphate backbone of phospholipids in the cellular membranes of Archaea. This Methanothrix thermoacetophila (strain DSM 6194 / JCM 14653 / NBRC 101360 / PT) (Methanosaeta thermophila) protein is Glycerol-1-phosphate dehydrogenase [NAD(P)+].